Reading from the N-terminus, the 94-residue chain is Pyrimidine/purine nucleoside phosphorylase (94 aa).

It belongs to the nucleoside phosphorylase PpnP family.

It catalyses the reaction a purine D-ribonucleoside + phosphate = a purine nucleobase + alpha-D-ribose 1-phosphate. It carries out the reaction adenosine + phosphate = alpha-D-ribose 1-phosphate + adenine. The catalysed reaction is cytidine + phosphate = cytosine + alpha-D-ribose 1-phosphate. The enzyme catalyses guanosine + phosphate = alpha-D-ribose 1-phosphate + guanine. It catalyses the reaction inosine + phosphate = alpha-D-ribose 1-phosphate + hypoxanthine. It carries out the reaction thymidine + phosphate = 2-deoxy-alpha-D-ribose 1-phosphate + thymine. The catalysed reaction is uridine + phosphate = alpha-D-ribose 1-phosphate + uracil. The enzyme catalyses xanthosine + phosphate = alpha-D-ribose 1-phosphate + xanthine. Catalyzes the phosphorolysis of diverse nucleosides, yielding D-ribose 1-phosphate and the respective free bases. Can use uridine, adenosine, guanosine, cytidine, thymidine, inosine and xanthosine as substrates. Also catalyzes the reverse reactions. This chain is Pyrimidine/purine nucleoside phosphorylase, found in Shigella dysenteriae serotype 1 (strain Sd197).